The primary structure comprises 155 residues: Peptide methionine sulfoxide reductase MsrB (155 aa).

Residues 15-137 (REALIATLNA…NSVSLTFIPT (123 aa)) form the MsrB domain. Residues Cys-54, Cys-57, Cys-103, and Cys-106 each contribute to the Zn(2+) site. Cys-126 (nucleophile) is an active-site residue.

The protein belongs to the MsrB Met sulfoxide reductase family. Zn(2+) serves as cofactor.

It catalyses the reaction L-methionyl-[protein] + [thioredoxin]-disulfide + H2O = L-methionyl-(R)-S-oxide-[protein] + [thioredoxin]-dithiol. This is Peptide methionine sulfoxide reductase MsrB from Xylella fastidiosa (strain M23).